An 888-amino-acid chain; its full sequence is C2H2 zinc finger transcription factor sltA (888 aa).

Disordered regions lie at residues 1–78, 132–176, and 388–407; these read MSTS…QRSP, IDSQ…SSEN, and RSSM…ASAP. Composition is skewed to polar residues over residues 23–32, 167–176, and 388–397; these read PSLSASTSIE, GLGTSLSSEN, and RSSMPSNREP. 2 C2H2-type zinc fingers span residues 500–522 and 561–586; these read QKCK…EKTH and YKCK…EKAH. The disordered stretch occupies residues 589-663; sequence DYVRSKHNGR…PTQTGSGDFP (75 aa). Over residues 602–632 the composition is skewed to polar residues; the sequence is KASNGATPQTPSIATPSSKAQGITTPLTGSE.

Its subcellular location is the nucleus. Transcription factor that contributes to azole resistance by coregulating the expression of the drug target erg11A and the drug efflux pump mdr1. Binds to the 5'-AGGCA-3' motif in the promoters of ergosterol biosynthesis and drug pump genes to regulate their expression. Is able to interact with the promoters of sltA, sltB, erg11A, erg13A, erg24A, mdr1, abcE and mfsC. Involved in antifungal drug resistance to azoles, terbinafine, and simvastatin but not amphotericin B or caspofungin. The chain is C2H2 zinc finger transcription factor sltA from Aspergillus fumigatus (strain CBS 144.89 / FGSC A1163 / CEA10) (Neosartorya fumigata).